Here is a 171-residue protein sequence, read N- to C-terminus: uncharacterized protein (171 aa).

The N-terminal stretch at 1 to 24 is a signal peptide; that stretch reads MIFDSLTMTQSSLSLLLLTGAIFS. The Extracellular segment spans residues 25–70; that stretch reads ISALYLTLFHRCATFSATSDLFLLVPLKFVSRDINDRLKTHYHHSC. The helical transmembrane segment at 71–91 threads the bilayer; it reads LGSPFLCIIFLFISPLLNYHF. At 92–140 the chain is on the cytoplasmic side; the sequence is RSLVRPPKIHQKGSIPTLTKNAETRCSHHLKQAAATGEVCKVVVIIKGH. Residues 141-161 form a helical membrane-spanning segment; it reads ILKDCSIFFFIIFPLIYPLFI. At 162–171 the chain is on the extracellular side; it reads NCSSKYNGLQ.

Its subcellular location is the membrane. This is an uncharacterized protein from Saccharomyces cerevisiae (strain ATCC 204508 / S288c) (Baker's yeast).